Here is a 230-residue protein sequence, read N- to C-terminus: Somatolactin (230 aa).

Residues 1–23 form the signal peptide; sequence MIKTKVLQAWMGIWLCAVNGLLG. Disulfide bonds link Cys28–Cys38, Cys87–Cys202, and Cys219–Cys227. N-linked (GlcNAc...) asparagine glycosylation occurs at Asn177.

Belongs to the somatotropin/prolactin family.

It is found in the secreted. The polypeptide is Somatolactin (Ictalurus punctatus (Channel catfish)).